The sequence spans 725 residues: Ribosomal RNA large subunit methyltransferase K/L (725 aa).

The 112-residue stretch at 46–157 (VAYRLCLWSR…RGEAVLSLDL (112 aa)) folds into the THUMP domain.

The protein belongs to the methyltransferase superfamily. RlmKL family.

It localises to the cytoplasm. The catalysed reaction is guanosine(2445) in 23S rRNA + S-adenosyl-L-methionine = N(2)-methylguanosine(2445) in 23S rRNA + S-adenosyl-L-homocysteine + H(+). It carries out the reaction guanosine(2069) in 23S rRNA + S-adenosyl-L-methionine = N(2)-methylguanosine(2069) in 23S rRNA + S-adenosyl-L-homocysteine + H(+). Its function is as follows. Specifically methylates the guanine in position 2445 (m2G2445) and the guanine in position 2069 (m7G2069) of 23S rRNA. This is Ribosomal RNA large subunit methyltransferase K/L from Ectopseudomonas mendocina (strain ymp) (Pseudomonas mendocina).